The following is a 180-amino-acid chain: Insertion element IS1296 uncharacterized 21.4 kDa protein (180 aa).

It belongs to the IS150/IS1296 orfA family.

This Mycoplasma mycoides subsp. mycoides SC protein is Insertion element IS1296 uncharacterized 21.4 kDa protein.